The following is a 63-amino-acid chain: DNA-directed RNA polymerase 7 kDa subunit (63 aa).

The protein belongs to the poxviridae DNA-directed RNA polymerase 7 kDa subunit family. The DNA-dependent RNA polymerase (vRNAP) consists of eight subunits encoded by early viral genes and termed according to their apparent molecular masses Rpo147, Rpo132, Rpo35, Rpo30, Rpo22, Rpo19, Rpo18, and Rpo7. The same holoenzyme, with the addition of the transcription-specificity factor RAP94, is used for early gene expression.

Its subcellular location is the virion. It carries out the reaction RNA(n) + a ribonucleoside 5'-triphosphate = RNA(n+1) + diphosphate. Part of the DNA-dependent RNA polymerase which catalyzes the transcription of viral DNA into RNA using the four ribonucleoside triphosphates as substrates. Responsible for the transcription of early, intermediate and late genes. DNA-dependent RNA polymerase associates with the early transcription factor (ETF), itself composed of OPG118 and OPG134, thereby allowing the early genes transcription. Late transcription, and probably also intermediate transcription, require newly synthesized RNA polymerase. The protein is DNA-directed RNA polymerase 7 kDa subunit (OPG090) of Monkeypox virus.